The primary structure comprises 243 residues: Transmembrane protein 174 (243 aa).

Transmembrane regions (helical) follow at residues 40 to 60 (LLFS…MGWI) and 73 to 93 (LLGP…VCKF).

As to quaternary structure, interacts with SLC34A1; regulates SLC34A1 internalization by PTH and FGF23.

It is found in the endoplasmic reticulum membrane. The protein localises to the apical cell membrane. Its function is as follows. Regulator of plasma phosphate homeostasis. Decreases serum inorganic phosphate (Pi) uptake by regulating the sodium-phosphate cotransporter SLC34A1 trafficking by PTH and FGF23 in the kidney. The protein is Transmembrane protein 174 (TMEM174) of Pongo abelii (Sumatran orangutan).